Here is a 252-residue protein sequence, read N- to C-terminus: UPF0736 protein OB1207 (252 aa).

This sequence belongs to the UPF0736 family.

The chain is UPF0736 protein OB1207 from Oceanobacillus iheyensis (strain DSM 14371 / CIP 107618 / JCM 11309 / KCTC 3954 / HTE831).